The following is a 512-amino-acid chain: 2-isopropylmalate synthase (512 aa).

A Pyruvate carboxyltransferase domain is found at 4–266 (IQFFDTTLRD…ETNIVLNQFK (263 aa)). Residues Asp-13, His-201, His-203, and Asn-237 each coordinate Mn(2+). Residues 390-512 (ELKHLQVQYV…SKQADFEEVK (123 aa)) are regulatory domain.

This sequence belongs to the alpha-IPM synthase/homocitrate synthase family. LeuA type 1 subfamily. In terms of assembly, homodimer. Mn(2+) serves as cofactor.

It is found in the cytoplasm. The catalysed reaction is 3-methyl-2-oxobutanoate + acetyl-CoA + H2O = (2S)-2-isopropylmalate + CoA + H(+). The protein operates within amino-acid biosynthesis; L-leucine biosynthesis; L-leucine from 3-methyl-2-oxobutanoate: step 1/4. In terms of biological role, catalyzes the condensation of the acetyl group of acetyl-CoA with 3-methyl-2-oxobutanoate (2-ketoisovalerate) to form 3-carboxy-3-hydroxy-4-methylpentanoate (2-isopropylmalate). In Listeria innocua serovar 6a (strain ATCC BAA-680 / CLIP 11262), this protein is 2-isopropylmalate synthase.